A 624-amino-acid chain; its full sequence is FAD-dependent monooxygenase apdD (624 aa).

Residues Glu73 and Asp359 each contribute to the FAD site.

Belongs to the paxM FAD-dependent monooxygenase family. FAD is required as a cofactor.

Its pathway is secondary metabolite biosynthesis. Functionally, FAD-dependent monooxygenase; part of the gene cluster that mediates the biosynthesis of aspyridones. The polyketide-amino acid backbone preaspyridone A is first assembled by the PKS-NRPS hybrid apdA. The assembly of preaspyridone A is initiated by loading of malonyl-CoA onto apdA, followed by decarboxylation to yield the acetyl starter unit. The growing polyketide chain then elongates into a tetraketide. The adpA PKS module catalyzes three Claisen condensations, as well as beta-keto processing and methylation. Alpha-methylation step during polyketide synthesis is a prerequisite and a key checkpoint for chain transfer between PKS and NRPS modules. The downstream NRPS module contains the condensation (C), adenylation (A), and thiolation (T) domains and catalyzes the incorporation of tyrosine via the formation of the L-tyrosinyl-thioester and the amide linkage between L-tyrosinyl-thioester and the tetraketide. The bimodular assembly line is terminated with a reductase (R) domain that facilitates formation and release of the tetramic acid product. Because apdA lacks a designated enoylreductase (ER) domain, the required activity is provided the enoyl reductase apdC. ApdC appears to operate with different stereoselectivity in different PKS cycle. Combined with apdC, apdA is proposed to synthesize preaspyridone A via about 20 enzymatic steps. A number of oxidative steps performed successively by the cytochrome P450 monooxygenases apdE and apdB are required for the conversion of preaspyridone A to aspyridone A. The cytochrome P450 monooxygenase apdE is responsible for the oxidative dephenylation of preaspyridone A. Finally, the predicted FAD-dependent monooxygenase apdD and the acyl-CoA dehydrogenase apdG may be involved in the transformation of aspyridone A into aspyridone B. The chain is FAD-dependent monooxygenase apdD from Emericella nidulans (strain FGSC A4 / ATCC 38163 / CBS 112.46 / NRRL 194 / M139) (Aspergillus nidulans).